We begin with the raw amino-acid sequence, 398 residues long: tRNA(Ile)-lysidine synthase (398 aa).

25-30 (SGGVDS) provides a ligand contact to ATP.

The protein belongs to the tRNA(Ile)-lysidine synthase family.

Its subcellular location is the cytoplasm. It carries out the reaction cytidine(34) in tRNA(Ile2) + L-lysine + ATP = lysidine(34) in tRNA(Ile2) + AMP + diphosphate + H(+). Ligates lysine onto the cytidine present at position 34 of the AUA codon-specific tRNA(Ile) that contains the anticodon CAU, in an ATP-dependent manner. Cytidine is converted to lysidine, thus changing the amino acid specificity of the tRNA from methionine to isoleucine. This is tRNA(Ile)-lysidine synthase from Francisella tularensis subsp. novicida (strain U112).